Here is a 314-residue protein sequence, read N- to C-terminus: Dihydroorotate dehydrogenase (fumarate) (314 aa).

Residues A21 and 45–46 (KS) each bind FMN. Substrate contacts are provided by residues K45, 69-73 (NSMGL), and N129. An FMN-binding site is contributed by N129. The Nucleophile role is filled by C132. Position 134 (N134) interacts with substrate. FMN contacts are provided by K166 and V195. A substrate-binding site is contributed by 196-197 (NS). FMN contacts are provided by residues G224, 251-252 (GG), and 273-274 (GT).

This sequence belongs to the dihydroorotate dehydrogenase family. Type 1 subfamily. In terms of assembly, homodimer. The cofactor is FMN.

Its subcellular location is the cytoplasm. It catalyses the reaction (S)-dihydroorotate + fumarate = orotate + succinate. Its pathway is pyrimidine metabolism; UMP biosynthesis via de novo pathway. In terms of biological role, catalyzes the conversion of dihydroorotate to orotate with fumarate as the electron acceptor. Molecular oxygen can replace fumarate in vitro. In Trypanosoma cruzi (strain CL Brener), this protein is Dihydroorotate dehydrogenase (fumarate) (pyr4).